A 378-amino-acid chain; its full sequence is P2X receptor A (378 aa).

Over 1–27 (MGFSFDWDDIFQYSTVKIVRIRDRRLG) the chain is Cytoplasmic. The chain crosses the membrane as a helical span at residues 28-48 (ILHLSFLVGIVAYIVVYSAII). At 49–307 (KKGYLFTEVP…IQTGTIGSFH (259 aa)) the chain is on the lumenal side. The segment at 290 to 303 (RHGIRVIFIQTGTI) is pore-forming motif. The chain crosses the membrane as a helical span at residues 308 to 328 (FQTLLLTLVSGLGLLAVATTV). The Cytoplasmic segment spans residues 329 to 378 (VDQLAIRLLPQRKSYSSLKFQVTESMSNPMKKRITTDEGEDVLYTRIEGL).

It belongs to the P2X receptor family.

The protein resides in the contractile vacuole membrane. P2X receptors are ATP-gated ion channels that play a role in intracellular calcium signaling. Not required for the purinergic response to extracellular nucleotides. Inward currents evoked by intracellular ATP and ATP analogs. Exclusively selective for ATP over other nucleotides. Insensitive to P2 receptor antagonists PPADS, suramin and 2',3'-O-(2,4,6-trinitrophenyl)-ATP but inhibited by nanomolar concentrations of copper and sodium ion. More permeable to ammonium than either sodium or potassium ions and less permeable to choline. It has been reported that p2xA is not essential for osmoregulation, however this information is in contradiction with another source which indicates that p2xA is required for osmoregulation. Found to be permeable to chloride ions. Inhibited by copper and sodium ions. The polypeptide is P2X receptor A (p2xA) (Dictyostelium discoideum (Social amoeba)).